We begin with the raw amino-acid sequence, 331 residues long: Adenosine deaminase (331 aa).

His12 and His14 together coordinate Zn(2+). 3 residues coordinate substrate: His14, Asp16, and Gly170. His197 contacts Zn(2+). Glu200 serves as the catalytic Proton donor. Asp278 contacts Zn(2+). Position 279 (Asp279) interacts with substrate.

This sequence belongs to the metallo-dependent hydrolases superfamily. Adenosine and AMP deaminases family. Adenosine deaminase subfamily. Requires Zn(2+) as cofactor.

It catalyses the reaction adenosine + H2O + H(+) = inosine + NH4(+). It carries out the reaction 2'-deoxyadenosine + H2O + H(+) = 2'-deoxyinosine + NH4(+). Functionally, catalyzes the hydrolytic deamination of adenosine and 2-deoxyadenosine. This chain is Adenosine deaminase, found in Shewanella loihica (strain ATCC BAA-1088 / PV-4).